Consider the following 325-residue polypeptide: Solute carrier family 35 member B1 (325 aa).

8 consecutive transmembrane segments (helical) span residues 18–38 (PVCF…QESI), 54–74 (FALS…KLLI), 88–108 (WLYA…NSAL), 139–159 (YPLA…LFMY), 171–191 (IFGY…LTGV), 213–233 (LWST…WEFL), 246–266 (ILLF…TVVY), and 288–308 (VILF…LVFL). The Di-lysine motif motif lies at 321–325 (KKTSH).

The protein belongs to the nucleotide-sugar transporter family. SLC35B subfamily.

It is found in the endoplasmic reticulum membrane. Probable sugar transporter. In Gallus gallus (Chicken), this protein is Solute carrier family 35 member B1 (SLC35B1).